A 942-amino-acid chain; its full sequence is Isoleucine--tRNA ligase (942 aa).

The 'HIGH' region signature appears at 58-68 (PYANGDIHIGH). Glu-566 contributes to the L-isoleucyl-5'-AMP binding site. Residues 607–611 (KMSKS) carry the 'KMSKS' region motif. Lys-610 is an ATP binding site. Residues Cys-905, Cys-908, Cys-925, and Cys-928 each coordinate Zn(2+).

Belongs to the class-I aminoacyl-tRNA synthetase family. IleS type 1 subfamily. As to quaternary structure, monomer. Zn(2+) serves as cofactor.

It is found in the cytoplasm. The enzyme catalyses tRNA(Ile) + L-isoleucine + ATP = L-isoleucyl-tRNA(Ile) + AMP + diphosphate. In terms of biological role, catalyzes the attachment of isoleucine to tRNA(Ile). As IleRS can inadvertently accommodate and process structurally similar amino acids such as valine, to avoid such errors it has two additional distinct tRNA(Ile)-dependent editing activities. One activity is designated as 'pretransfer' editing and involves the hydrolysis of activated Val-AMP. The other activity is designated 'posttransfer' editing and involves deacylation of mischarged Val-tRNA(Ile). The polypeptide is Isoleucine--tRNA ligase (Vibrio campbellii (strain ATCC BAA-1116)).